A 404-amino-acid chain; its full sequence is Plasma serine protease inhibitor (404 aa).

The signal sequence occupies residues Met1–Leu19. A propeptide spans Arg20 to Lys24 (removed in mature form). O-linked (GalNAc...) threonine glycans are attached at residues Thr35 and Thr36. Asn245, Asn258, and Asn334 each carry an N-linked (GlcNAc...) asparagine glycan.

The protein belongs to the serpin family. As to quaternary structure, forms protease inhibiting heterodimers in extracellular body fluids with serine proteases such as activated protein C/coagulation factor V/F5, acrosin/ACR, chymotrypsinogen B/CTRB1, prothrombin/F2, factor Xa/F10, factor XI/F11, kallikrein/KLKB1, tissue kallikrein, trypsin/PRSS1, prostate specific antigen/KLK3, tissue plasminogen activator/PLAT and urinary plasminogen activator/PLAU. Forms membrane-anchored serine proteases inhibiting heterodimers with TMPRSS7 and TMPRSS11E. Interacts with SEMG2. Post-translationally, N-glycosylated; glycans consist of a mixture of sialylated bi- (including sialyl-Lewis X epitopes), tri- and tetra-antennary complex-type chains; affects the maximal heparin- and thrombomodulin-enhanced rates of thrombin inhibition. O-glycosylated; further modified with 2 sialic acid residues. Proteolytically cleaved at the N-terminus; inhibits slightly the heparin- and thrombomodulin-enhanced rates of thrombin inhibition. N- and O-glycosylated. In terms of processing, proteolytically cleaved. Inhibition of proteases is accompanied by formation of a stable enzyme-inhibitor complex and by degradation of the serpin to lower molecular weight derivatives. Expressed strongly in the liver, and moderately in the kidney and testis, but not in other tissues tested.

It localises to the secreted. The protein localises to the extracellular space. With respect to regulation, its inhibitory activity is greatly enhanced in the presence of glycosaminoglycans, heparin, thrombomodulin and phospholipids vesicles. Heparin-dependent serine protease inhibitor acting in body fluids and secretions. Inactivates serine proteases by binding irreversibly to their serine activation site. Involved in the regulation of intravascular and extravascular proteolytic activities. Plays hemostatic roles in the blood plasma. Acts as a procoagulant and pro-inflammatory factor by inhibiting the anticoagulant activated protein C factor as well as the generation of activated protein C factor by the thrombin/thrombomodulin complex. Acts as an anticoagulant factor by inhibiting blood coagulation factors like prothrombin, factor XI, factor Xa, plasma kallikrein and fibrinolytic enzymes such as tissue- and urinary-type plasminogen activators. In seminal plasma, inactivates several serine proteases implicated in the reproductive system. Inhibits the serpin acrosin; indirectly protects component of the male genital tract from being degraded by excessive released acrosin. Inhibits tissue- and urinary-type plasminogen activator, prostate-specific antigen and kallikrein activities; has a control on the sperm motility and fertilization. Inhibits the activated protein C-catalyzed degradation of SEMG1 and SEMG2; regulates the degradation of semenogelin during the process of transfer of spermatozoa from the male reproductive tract into the female tract. In urine, inhibits urinary-type plasminogen activator and kallikrein activities. Inactivates membrane-anchored serine proteases activities such as MPRSS7 and TMPRSS11E. Inhibits urinary-type plasminogen activator-dependent tumor cell invasion and metastasis. May also play a non-inhibitory role in seminal plasma and urine as a hydrophobic hormone carrier by its binding to retinoic acid. The chain is Plasma serine protease inhibitor (SERPINA5) from Bos taurus (Bovine).